Consider the following 394-residue polypeptide: Phosphoglycerate kinase (394 aa).

Residues 21 to 23, Arg-36, 59 to 62, Arg-118, and Arg-151 each bind substrate; these read DFN and HLGR. The residue at position 183 (Ser-183) is a Phosphoserine. Positions 201 and 292 each coordinate ATP. Thr-299 bears the Phosphothreonine mark. ATP contacts are provided by residues Glu-323 and 350–353; that span reads GGDS.

This sequence belongs to the phosphoglycerate kinase family. In terms of assembly, monomer.

The protein localises to the cytoplasm. It catalyses the reaction (2R)-3-phosphoglycerate + ATP = (2R)-3-phospho-glyceroyl phosphate + ADP. Its pathway is carbohydrate degradation; glycolysis; pyruvate from D-glyceraldehyde 3-phosphate: step 2/5. This chain is Phosphoglycerate kinase, found in Bacillus cereus (strain B4264).